A 456-amino-acid polypeptide reads, in one-letter code: Chromosomal replication initiator protein DnaA (456 aa).

Positions 1–73 are domain I, interacts with DnaA modulators; the sequence is MEIYLDNLWD…ADVVHDILGY (73 aa). A domain II region spans residues 73 to 117; the sequence is YPVEIYLTTFLVEDSRKNDSGLIWSEHKSVNILGENLSIPKPLPA. Positions 118–334 are domain III, AAA+ region; that stretch reads NLNAKYMFSR…GALTRVVTYI (217 aa). ATP is bound by residues G162, G164, K165, and T166. The domain IV, binds dsDNA stretch occupies residues 335–456; that stretch reads SISGLPMTVE…SDRINFSSRH (122 aa).

It belongs to the DnaA family. As to quaternary structure, oligomerizes as a right-handed, spiral filament on DNA at oriC.

It localises to the cytoplasm. Functionally, plays an essential role in the initiation and regulation of chromosomal replication. ATP-DnaA binds to the origin of replication (oriC) to initiate formation of the DNA replication initiation complex once per cell cycle. Binds the DnaA box (a 9 base pair repeat at the origin) and separates the double-stranded (ds)DNA. Forms a right-handed helical filament on oriC DNA; dsDNA binds to the exterior of the filament while single-stranded (ss)DNA is stabiized in the filament's interior. The ATP-DnaA-oriC complex binds and stabilizes one strand of the AT-rich DNA unwinding element (DUE), permitting loading of DNA polymerase. After initiation quickly degrades to an ADP-DnaA complex that is not apt for DNA replication. Binds acidic phospholipids. This Trichodesmium erythraeum (strain IMS101) protein is Chromosomal replication initiator protein DnaA.